Reading from the N-terminus, the 246-residue chain is Virulence plasmid protein pGP6-D (246 aa).

This sequence belongs to the UPF0137 (pGP6-D) family.

This Chlamydia psittaci (Chlamydophila psittaci) protein is Virulence plasmid protein pGP6-D.